Here is a 503-residue protein sequence, read N- to C-terminus: Glutamate--tRNA ligase (503 aa).

The 'HIGH' region signature appears at 26–36; that stretch reads PSPTGTPHVGL. A disordered region spans residues 126-148; it reads TPEEVEARHRAAGRDPKLGYDNA. Residues 130–148 show a composition bias toward basic and acidic residues; that stretch reads VEARHRAAGRDPKLGYDNA. A 'KMSKS' region motif is present at residues 270 to 274; it reads KLSKR. K273 is a binding site for ATP.

This sequence belongs to the class-I aminoacyl-tRNA synthetase family. Glutamate--tRNA ligase type 1 subfamily. In terms of assembly, monomer.

It localises to the cytoplasm. It catalyses the reaction tRNA(Glu) + L-glutamate + ATP = L-glutamyl-tRNA(Glu) + AMP + diphosphate. Functionally, catalyzes the attachment of glutamate to tRNA(Glu) in a two-step reaction: glutamate is first activated by ATP to form Glu-AMP and then transferred to the acceptor end of tRNA(Glu). The sequence is that of Glutamate--tRNA ligase from Saccharopolyspora erythraea (strain ATCC 11635 / DSM 40517 / JCM 4748 / NBRC 13426 / NCIMB 8594 / NRRL 2338).